Consider the following 381-residue polypeptide: MGRGFLRGVLTLLPLRSVLQVQHCMLVSEPDLPPKRPRNNLMAPPRIGTHNGTFHCDEALACALLRLLPEYRNAEIVRTRDPEKLALCDIVVDVGGEYNPQRHRYDHHQRTFTETMSSLCPGKPWQTKLSSAGLVYLHFGHKLLAQLLGTSEEDSVVDTIYDKMYENFVEEVDAVDNGISQWAEGEPRYALTTTLSARVSRLNPTWNQPDQDTEAGFRRAMDLVQEEFLQRLNFYQHSWLPARALVEEALAQRFKVDSSGEIVELAKGGCPWKEHLYHLESELSPTVAITFVIYTDQAGQWRVQCVPKEPHSFQSRLPLPEPWRGLRDEALDQVSGIPGCIFVHASGFIGGHHTREGALNMARATLAQRTAPVPLANAVVQ.

The N-terminal 47 residues, 1 to 47 (MGRGFLRGVLTLLPLRSVLQVQHCMLVSEPDLPPKRPRNNLMAPPRI), are a transit peptide targeting the mitochondrion. Residues Lys-267 and Lys-273 each carry the N6-acetyllysine modification.

Belongs to the MYG1 family.

Its subcellular location is the nucleus. It is found in the nucleoplasm. The protein localises to the mitochondrion matrix. It localises to the nucleolus. In terms of biological role, 3'-5' RNA exonuclease which cleaves in situ on specific transcripts in both nucleus and mitochondrion. Involved in regulating spatially segregated organellar RNA processing, acts as a coordinator of nucleo-mitochondrial crosstalk. In nucleolus, processes pre-ribosomal RNA involved in ribosome assembly and alters cytoplasmic translation. In mitochondrial matrix, processes 3'-termini of the mito-ribosomal and messenger RNAs and controls translation of mitochondrial proteins. The chain is MYG1 exonuclease from Rattus norvegicus (Rat).